Here is a 541-residue protein sequence, read N- to C-terminus: Putative nucleobase-ascorbate transporter 10 (541 aa).

A run of 12 helical transmembrane segments spans residues 52–72, 79–99, 101–121, 141–161, 173–193, 196–216, 235–255, 299–319, 376–396, 397–417, 433–453, and 476–496; these read LLSLGITVLIPSVLVPLMGGG, VIQTLLFVSGLTTLFQSFFGT, LPVIAVASYAYIIPITSIIYS, IQGALIITGCFQVLICILGVW, IAPLATFTGLGLYHIGFPLLA, VEVGLPGLILLIFVTQYLPRF, GMILCIPLVWLFAQLLTSSGV, SFAMMAASFVTLFESTGLFYA, RVIQISAAFMIFFSIFGKFGA, FFASIPLPIMASLYCIVLCFV, FNIKFILGFSFFMAISIPQYF, and VIFMSHTTVAAIIAIVLDCTL.

It belongs to the nucleobase:cation symporter-2 (NCS2) (TC 2.A.40) family.

The protein resides in the membrane. The chain is Putative nucleobase-ascorbate transporter 10 (NAT10) from Arabidopsis thaliana (Mouse-ear cress).